The chain runs to 507 residues: Transcription factor NIGTH1 (507 aa).

Disordered regions lie at residues 139-172 (ASAA…TALD) and 238-268 (SREA…RKAR). Over residues 152–161 (PKEHSEHHPL) the composition is skewed to basic and acidic residues. The HTH myb-type domain maps to 263–323 (PHRKARRCWS…HLQKYRLHTR (61 aa)). Residues 294-319 (PKQIRELMKVDGLTNDEVKSHLQKYR) constitute a DNA-binding region (H-T-H motif). A disordered region spans residues 402 to 507 (AVAPPPPLPP…TTTSAGAINY (106 aa)). The segment covering 412–433 (QQQLAPPYSAKSSASARLGSPD) has biased composition (low complexity). Residues 437–446 (RGSGGGGGAA) are compositionally biased toward gly residues. The segment covering 456–476 (ESIEEEGEGEEREDDDDDDEM) has biased composition (acidic residues).

As to quaternary structure, interacts with ACA5.

The protein resides in the nucleus. Functionally, probable transcription factor that may play a role in regulatory networks controlling development and metabolism. The polypeptide is Transcription factor NIGTH1 (Oryza sativa subsp. japonica (Rice)).